A 183-amino-acid polypeptide reads, in one-letter code: Putative 3-methyladenine DNA glycosylase (183 aa).

The protein belongs to the DNA glycosylase MPG family.

In Rickettsia africae (strain ESF-5), this protein is Putative 3-methyladenine DNA glycosylase.